The chain runs to 152 residues: Xanthine-guanine phosphoribosyltransferase (152 aa).

Residues 37–38, R69, and 88–96 each bind 5-phospho-alpha-D-ribose 1-diphosphate; these read RG and DDLVDTGGT. GMP is bound at residue R69. D89 lines the Mg(2+) pocket. Guanine contacts are provided by D92 and I135. D92 and I135 together coordinate xanthine. GMP-binding positions include 92-96 and 134-135; these read DTGGT and WI.

This sequence belongs to the purine/pyrimidine phosphoribosyltransferase family. XGPT subfamily. In terms of assembly, homotetramer. Mg(2+) serves as cofactor.

The protein resides in the cell inner membrane. The catalysed reaction is GMP + diphosphate = guanine + 5-phospho-alpha-D-ribose 1-diphosphate. It catalyses the reaction XMP + diphosphate = xanthine + 5-phospho-alpha-D-ribose 1-diphosphate. It carries out the reaction IMP + diphosphate = hypoxanthine + 5-phospho-alpha-D-ribose 1-diphosphate. Its pathway is purine metabolism; GMP biosynthesis via salvage pathway; GMP from guanine: step 1/1. The protein operates within purine metabolism; XMP biosynthesis via salvage pathway; XMP from xanthine: step 1/1. In terms of biological role, purine salvage pathway enzyme that catalyzes the transfer of the ribosyl-5-phosphate group from 5-phospho-alpha-D-ribose 1-diphosphate (PRPP) to the N9 position of the 6-oxopurines guanine and xanthine to form the corresponding ribonucleotides GMP (guanosine 5'-monophosphate) and XMP (xanthosine 5'-monophosphate), with the release of PPi. To a lesser extent, also acts on hypoxanthine. The polypeptide is Xanthine-guanine phosphoribosyltransferase (Yersinia pseudotuberculosis serotype O:1b (strain IP 31758)).